The primary structure comprises 121 residues: Large ribosomal subunit protein uL22 (121 aa).

Belongs to the universal ribosomal protein uL22 family. In terms of assembly, part of the 50S ribosomal subunit.

In terms of biological role, this protein binds specifically to 23S rRNA; its binding is stimulated by other ribosomal proteins, e.g. L4, L17, and L20. It is important during the early stages of 50S assembly. It makes multiple contacts with different domains of the 23S rRNA in the assembled 50S subunit and ribosome. Its function is as follows. The globular domain of the protein is located near the polypeptide exit tunnel on the outside of the subunit, while an extended beta-hairpin is found that lines the wall of the exit tunnel in the center of the 70S ribosome. The polypeptide is Large ribosomal subunit protein uL22 (Synechococcus sp. (strain CC9902)).